Reading from the N-terminus, the 592-residue chain is Aspartate--tRNA(Asp/Asn) ligase (592 aa).

Glu175 contributes to the L-aspartate binding site. An aspartate region spans residues 199 to 202 (QLFK). Arg221 serves as a coordination point for L-aspartate. ATP is bound by residues 221 to 223 (RDE) and Gln230. Residue His450 coordinates L-aspartate. ATP is bound at residue Glu483. Arg490 is a binding site for L-aspartate. 535-538 (GLDR) lines the ATP pocket.

It belongs to the class-II aminoacyl-tRNA synthetase family. Type 1 subfamily. As to quaternary structure, homodimer.

The protein localises to the cytoplasm. It carries out the reaction tRNA(Asx) + L-aspartate + ATP = L-aspartyl-tRNA(Asx) + AMP + diphosphate. Aspartyl-tRNA synthetase with relaxed tRNA specificity since it is able to aspartylate not only its cognate tRNA(Asp) but also tRNA(Asn). Reaction proceeds in two steps: L-aspartate is first activated by ATP to form Asp-AMP and then transferred to the acceptor end of tRNA(Asp/Asn). The chain is Aspartate--tRNA(Asp/Asn) ligase from Acinetobacter baumannii (strain AB307-0294).